Consider the following 417-residue polypeptide: Riboflavin biosynthesis protein RibBA (417 aa).

The segment at 1 to 204 (MTRLDSIERA…IADLIEWRRK (204 aa)) is DHBP synthase. D-ribulose 5-phosphate-binding positions include 28–29 (RE), aspartate 33, 141–145 (RPGHT), and glutamate 165. Glutamate 29 contributes to the Mg(2+) binding site. Residue histidine 144 coordinates Mg(2+). A GTP cyclohydrolase II region spans residues 205–417 (HEKHVQRIAE…LDDHPEADGA (213 aa)). Position 259 to 263 (259 to 263 (RVHSE)) interacts with GTP. 3 residues coordinate Zn(2+): cysteine 264, cysteine 275, and cysteine 277. GTP is bound by residues glutamine 280, 303-305 (EGR), and threonine 325. Aspartate 337 (proton acceptor; for GTP cyclohydrolase activity) is an active-site residue. Catalysis depends on arginine 339, which acts as the Nucleophile; for GTP cyclohydrolase activity. Residues threonine 360 and lysine 365 each contribute to the GTP site.

The protein in the N-terminal section; belongs to the DHBP synthase family. In the C-terminal section; belongs to the GTP cyclohydrolase II family. It depends on Mg(2+) as a cofactor. Mn(2+) serves as cofactor. Requires Zn(2+) as cofactor.

It catalyses the reaction D-ribulose 5-phosphate = (2S)-2-hydroxy-3-oxobutyl phosphate + formate + H(+). The enzyme catalyses GTP + 4 H2O = 2,5-diamino-6-hydroxy-4-(5-phosphoribosylamino)-pyrimidine + formate + 2 phosphate + 3 H(+). It functions in the pathway cofactor biosynthesis; riboflavin biosynthesis; 2-hydroxy-3-oxobutyl phosphate from D-ribulose 5-phosphate: step 1/1. It participates in cofactor biosynthesis; riboflavin biosynthesis; 5-amino-6-(D-ribitylamino)uracil from GTP: step 1/4. Its function is as follows. Catalyzes the conversion of D-ribulose 5-phosphate to formate and 3,4-dihydroxy-2-butanone 4-phosphate. In terms of biological role, catalyzes the conversion of GTP to 2,5-diamino-6-ribosylamino-4(3H)-pyrimidinone 5'-phosphate (DARP), formate and pyrophosphate. The protein is Riboflavin biosynthesis protein RibBA of Mycobacteroides abscessus (strain ATCC 19977 / DSM 44196 / CCUG 20993 / CIP 104536 / JCM 13569 / NCTC 13031 / TMC 1543 / L948) (Mycobacterium abscessus).